The primary structure comprises 274 residues: Glutamate--cysteine ligase regulatory subunit (274 aa).

Serine 59 is subject to Phosphoserine. At lysine 263 the chain carries N6-acetyllysine.

Belongs to the aldo/keto reductase family. Glutamate--cysteine ligase light chain subfamily. As to quaternary structure, heterodimer of a catalytic heavy chain and a regulatory light chain. As to expression, most abundant in kidney. Also found in liver and testis.

Its pathway is sulfur metabolism; glutathione biosynthesis; glutathione from L-cysteine and L-glutamate: step 1/2. The chain is Glutamate--cysteine ligase regulatory subunit (Gclm) from Rattus norvegicus (Rat).